We begin with the raw amino-acid sequence, 423 residues long: Gamma-glutamyl phosphate reductase (423 aa).

Belongs to the gamma-glutamyl phosphate reductase family.

Its subcellular location is the cytoplasm. The catalysed reaction is L-glutamate 5-semialdehyde + phosphate + NADP(+) = L-glutamyl 5-phosphate + NADPH + H(+). Its pathway is amino-acid biosynthesis; L-proline biosynthesis; L-glutamate 5-semialdehyde from L-glutamate: step 2/2. Its function is as follows. Catalyzes the NADPH-dependent reduction of L-glutamate 5-phosphate into L-glutamate 5-semialdehyde and phosphate. The product spontaneously undergoes cyclization to form 1-pyrroline-5-carboxylate. This is Gamma-glutamyl phosphate reductase from Burkholderia orbicola (strain MC0-3).